Consider the following 168-residue polypeptide: Phosphopantetheine adenylyltransferase (168 aa).

Ser-8 is a substrate binding site. ATP is bound by residues 8–9 (SF) and His-16. Substrate-binding residues include Lys-40, Ala-72, and Arg-86. ATP is bound by residues 87–89 (GLR), Glu-97, and 122–128 (YSFLSSS).

This sequence belongs to the bacterial CoaD family. In terms of assembly, homohexamer. The cofactor is Mg(2+).

It localises to the cytoplasm. The catalysed reaction is (R)-4'-phosphopantetheine + ATP + H(+) = 3'-dephospho-CoA + diphosphate. It participates in cofactor biosynthesis; coenzyme A biosynthesis; CoA from (R)-pantothenate: step 4/5. Reversibly transfers an adenylyl group from ATP to 4'-phosphopantetheine, yielding dephospho-CoA (dPCoA) and pyrophosphate. This chain is Phosphopantetheine adenylyltransferase, found in Trichodesmium erythraeum (strain IMS101).